Consider the following 312-residue polypeptide: Ribonuclease Z (312 aa).

Zn(2+) contacts are provided by His-63, His-65, Asp-67, His-68, His-140, Asp-211, and His-269. The active-site Proton acceptor is Asp-67.

It belongs to the RNase Z family. As to quaternary structure, homodimer. The cofactor is Zn(2+).

The catalysed reaction is Endonucleolytic cleavage of RNA, removing extra 3' nucleotides from tRNA precursor, generating 3' termini of tRNAs. A 3'-hydroxy group is left at the tRNA terminus and a 5'-phosphoryl group is left at the trailer molecule.. In terms of biological role, zinc phosphodiesterase, which displays some tRNA 3'-processing endonuclease activity. Probably involved in tRNA maturation, by removing a 3'-trailer from precursor tRNA. This is Ribonuclease Z from Anoxybacillus flavithermus (strain DSM 21510 / WK1).